The chain runs to 355 residues: Histidinol-phosphate aminotransferase 2 (355 aa).

Residue K210 is modified to N6-(pyridoxal phosphate)lysine.

Belongs to the class-II pyridoxal-phosphate-dependent aminotransferase family. Histidinol-phosphate aminotransferase subfamily. In terms of assembly, homodimer. Pyridoxal 5'-phosphate serves as cofactor.

The catalysed reaction is L-histidinol phosphate + 2-oxoglutarate = 3-(imidazol-4-yl)-2-oxopropyl phosphate + L-glutamate. The protein operates within amino-acid biosynthesis; L-histidine biosynthesis; L-histidine from 5-phospho-alpha-D-ribose 1-diphosphate: step 7/9. This is Histidinol-phosphate aminotransferase 2 from Gluconobacter oxydans (strain 621H) (Gluconobacter suboxydans).